The primary structure comprises 28 residues: Expansin-B1 (28 aa).

Residues 11–28 form the Expansin-like CBD domain; the sequence is MLLSLQGPXSLRMVSESG.

It belongs to the expansin family. Expansin B subfamily.

It is found in the secreted. The protein localises to the cell wall. The protein resides in the membrane. Its function is as follows. May cause loosening and extension of plant cell walls by disrupting non-covalent bonding between cellulose microfibrils and matrix glucans. The polypeptide is Expansin-B1 (Pseudotsuga menziesii (Douglas-fir)).